Reading from the N-terminus, the 142-residue chain is Galactose-6-phosphate isomerase subunit LacA (142 aa).

The protein belongs to the LacAB/RpiB family. In terms of assembly, heteromultimeric protein consisting of LacA and LacB.

The catalysed reaction is aldehydo-D-galactose 6-phosphate = keto-D-tagatose 6-phosphate. The protein operates within carbohydrate metabolism; D-galactose 6-phosphate degradation; D-tagatose 6-phosphate from D-galactose 6-phosphate: step 1/1. This is Galactose-6-phosphate isomerase subunit LacA from Clostridium acetobutylicum (strain ATCC 824 / DSM 792 / JCM 1419 / IAM 19013 / LMG 5710 / NBRC 13948 / NRRL B-527 / VKM B-1787 / 2291 / W).